The sequence spans 122 residues: Large ribosomal subunit protein uL14 (122 aa).

Belongs to the universal ribosomal protein uL14 family. As to quaternary structure, part of the 50S ribosomal subunit. Forms a cluster with proteins L3 and L19. In the 70S ribosome, L14 and L19 interact and together make contacts with the 16S rRNA in bridges B5 and B8.

Binds to 23S rRNA. Forms part of two intersubunit bridges in the 70S ribosome. This is Large ribosomal subunit protein uL14 from Herminiimonas arsenicoxydans.